The chain runs to 363 residues: Tetraacyldisaccharide 4'-kinase (363 aa).

Position 78-85 (78-85 (TVGGNGKT)) interacts with ATP.

This sequence belongs to the LpxK family.

The catalysed reaction is a lipid A disaccharide + ATP = a lipid IVA + ADP + H(+). Its pathway is glycolipid biosynthesis; lipid IV(A) biosynthesis; lipid IV(A) from (3R)-3-hydroxytetradecanoyl-[acyl-carrier-protein] and UDP-N-acetyl-alpha-D-glucosamine: step 6/6. Transfers the gamma-phosphate of ATP to the 4'-position of a tetraacyldisaccharide 1-phosphate intermediate (termed DS-1-P) to form tetraacyldisaccharide 1,4'-bis-phosphate (lipid IVA). This chain is Tetraacyldisaccharide 4'-kinase, found in Wigglesworthia glossinidia brevipalpis.